Reading from the N-terminus, the 1133-residue chain is MKSKVDKPVTNGAPNATKTKAKEDRKRAKTQKSEADSQIPAKILKKSKKEKPAETEEKENTASNANLKVSQINKAVFVVFKKMQGSQLTKKMINSLITLLRDDTNAEQRTATTGYVLKRLIRSTGADDMKTVSLAASYIHCILNAVPAIDAFEVLETLKRDLAVGSQQRGKEDSLAAVGQLVTAFCILQTPQFAKAEPKLVTAVFQILAAQLKGREYLVSLCGDILAVSFKQLPAAIFEEYVWPLLQPELNKPLSGLKVNTCDVLLAVHLTFSSVLGRENILASLWPKKPVYTQLFDLYFSGSTIHSDGVYARLASFLVNGGKDMLAAWQQYIDSKQPLKLNAAKACAIQVLSHVLLNFKPREEQLILDIFTPTCVQFLLHECSSVKWDKGEGKKPSLKKLKEICFKFEGSLVLCYEKQFQNDDNKLHLLLKLLEHTLQLDSVISLPRFCQKLINQLSVESLHKLYDYYNNKLYSLEDEDRVSRVHCLNQMQLILNHSKLSQTAKWRQKQLNYLLLAGLFHLDASKKPCEAAQASAFSRQCAARCEEIFLGSLLHKCSGLPGLCQLLQKTLSYLNKELGQPDAESKLRSPRDESLQKAWKQVEKLLERPSKESDVVGQSFEALILFVSLALCTKIPPSITVLEDLIICRKNALQKSKEQVNEELKWQDVLTDALLQLLLQTGHFWREFVQLVATALIPHLEHGNLEQVLEVLNMNKNPLSKKSDGEEESDDELDKEESLKDSSDDSEDEDEDEEEDEGEDDAESHLAQIRESVRQALVNDGDADDDGASSVDWNDVDEEQGERLNAALERSFQMFRPKSRKAQEKERPTKSERIDSTNLLHFRIRALDLLELFITKKPTQSVILDVLHCVFQVYSHCAADSKLQSLREASLKLLKKILARNIELKENQSTAPILEAIEQLMSSGEEHSEEDQENGKQPASRQAKRDIIIWRDRCFAYLVSQASADGEPKKSAVWPLLVEFLELWVAKRRSRLSLASFEALFQSGQWQGVAPLAVVLASHLDVQKTRSFRRAQILKLLSEQGRRLEVAFKDNNSSSKKFEKQIARYVNQLETKASSSKELNLLLKILAQGGEKWQKLREQIQLVAKDLQPNKKVAKQKKQAAAKPMVVEDEEST.

4 disordered regions span residues 1-62, 718-764, 924-943, and 1111-1133; these read MKSK…ENTA, PLSK…DAES, GEEH…SRQA, and KKVA…EEST. Basic and acidic residues-rich tracts occupy residues 20-35 and 50-60; these read KAKE…KSEA and EKPAETEEKEN. Composition is skewed to acidic residues over residues 725-735 and 744-762; these read GEEESDDELDK and DDSE…EDDA.

This sequence belongs to the MYBBP1A family. Interacts with nclb.

The protein localises to the cytoplasm. It localises to the nucleus. Its subcellular location is the nucleolus. Its function is as follows. Has a role in rRNA biogenesis, cell proliferation and tissue growth by contributing to the localization of nclb to the nucleolus. The chain is Myb-binding protein 1A from Drosophila melanogaster (Fruit fly).